A 264-amino-acid chain; its full sequence is Stress response regulator protein 1 (264 aa).

Residues Ile50–Thr74 form a disordered region. Residues Asp62–Thr74 show a composition bias toward acidic residues. The region spanning Arg138–Asp256 is the Response regulatory domain. At Asp189 the chain carries 4-aspartylphosphate.

In terms of biological role, required for stress adaptation, morphogenesis and virulence. The polypeptide is Stress response regulator protein 1 (SRR1) (Candida tropicalis (strain ATCC MYA-3404 / T1) (Yeast)).